A 461-amino-acid chain; its full sequence is E3 ubiquitin-protein ligase TRIM15 (461 aa).

The RING-type zinc finger occupies 12 to 57; the sequence is CSDCQGRLEDAVTAACGHTFCRLCLPLPPQMGAQPSSRVLLCPVCQ. The segment at 74 to 115 adopts a B box-type zinc-finger fold; the sequence is LGETYCEEHGEKIYFFCENDAEFLCVFCREGPSHQAHAVGFL. Residues C79, H82, C101, and H107 each contribute to the Zn(2+) site. Residues 123 to 230 adopt a coiled-coil conformation; it reads RDRLRGRLEA…EKCQQPASEL (108 aa). The region spanning 272–461 is the B30.2/SPRY domain; that stretch reads EMLRAFSENL…KKGSCLTLKG (190 aa).

It belongs to the TRIM/RBCC family. In terms of assembly, interacts with paxillin/PXN; this interaction recruits TRIM15 to focal adhesions. Interacts with TRIM8; this interaction prevents TRIM8 cytoplasmic translocation.

The protein resides in the cytoplasm. The protein localises to the nucleus. Its subcellular location is the cell junction. It is found in the focal adhesion. It catalyses the reaction S-ubiquitinyl-[E2 ubiquitin-conjugating enzyme]-L-cysteine + [acceptor protein]-L-lysine = [E2 ubiquitin-conjugating enzyme]-L-cysteine + N(6)-ubiquitinyl-[acceptor protein]-L-lysine.. Functionally, E3 ubiquitin ligase that plays a role in several processes including innate antiviral immnity, cell migration and chemotaxis. Acts as a 'Lys-63'-specific ubiquitin ligase for MAPK1/ERK2 and MAPK3/ERK1, promoting their activation by facilitating their interaction with MAP2K1 and MAP2K2. Also plays a role in cell migration and chemotaxis by acting as a stable focal adhesion component upon recruitment by multi-adapter protein paxillin/PXN. Functions in the RIGI-mediated interferon induction pathway upstream or at the level of MAVS. Inhibits NF-kappa-B activation by turnover of 'Lys-63'-linked ubiquitination of MAP3K7/TAK1. Mechanistically, prevents TRIM8 cytoplasmic translocation and thus inhibits TRIM8-mediated 'Lys-63'-linked polyubiquitination of MAP3K7/TAK1 in the cytoplasm. Also has an important regulatory effect on the activation of hepatic stellate cells (HSCs). The polypeptide is E3 ubiquitin-protein ligase TRIM15 (TRIM15) (Sus scrofa (Pig)).